The sequence spans 543 residues: Serine/threonine-protein kinase PkaA (543 aa).

The 269-residue stretch at 8 to 276 (YLLEEPLGRG…ENLARGLRVV (269 aa)) folds into the Protein kinase domain. Residues 14 to 22 (LGRGATGTV) and Lys48 each bind ATP. The active-site Proton acceptor is the Asp142. Residues 303–480 (PAPAQVPGAP…RQRSANPMRI (178 aa)) form a disordered region. A compositionally biased stretch (pro residues) spans 352 to 361 (VMPPVPPGQP). Low complexity-rich tracts occupy residues 407–420 (RQVS…RQAP) and 428–451 (PGYG…QPQR). A compositionally biased stretch (pro residues) spans 452-461 (YAPPPAPEPQ).

This sequence belongs to the protein kinase superfamily. Ser/Thr protein kinase family. Autophosphorylated mainly at Thr and slightly at Ser.

It carries out the reaction L-seryl-[protein] + ATP = O-phospho-L-seryl-[protein] + ADP + H(+). The catalysed reaction is L-threonyl-[protein] + ATP = O-phospho-L-threonyl-[protein] + ADP + H(+). The sequence is that of Serine/threonine-protein kinase PkaA (pkaA) from Streptomyces coelicolor (strain ATCC BAA-471 / A3(2) / M145).